The primary structure comprises 358 residues: Triacylglycerol lipase (358 aa).

Positions 1-39 (MVRSMRSRVAARAVAWALAVMPLAGAAGLTMAASPAAVA) are cleaved as a signal peptide. The 280-residue stretch at 48–327 (YPVILVHGLA…TSYHWNHLDE (280 aa)) folds into the AB hydrolase-1 domain. Leu-56 is a binding site for substrate. Residue Ser-126 is the Nucleophile of the active site. Gln-127 lines the substrate pocket. Cys-229 and Cys-308 form a disulfide bridge. Position 280 (Asp-280) interacts with Ca(2+). Residues Asp-302 and His-324 each act as charge relay system in the active site. Ca(2+)-binding residues include Asp-326, Gln-330, and Val-334.

Belongs to the AB hydrolase superfamily. Pseudomonas lipase family. In terms of assembly, monomer. Interacts with lipase-specific foldase Lif. Ca(2+) is required as a cofactor.

It localises to the secreted. The catalysed reaction is a triacylglycerol + H2O = a diacylglycerol + a fatty acid + H(+). Its function is as follows. Catalyzes the hydrolysis of triacylglycerol. This chain is Triacylglycerol lipase, found in Burkholderia plantarii.